A 65-amino-acid chain; its full sequence is Large ribosomal subunit protein bL35 (65 aa).

Basic and acidic residues predominate over residues 1 to 10 (MPKMKTDRGA). Positions 1-24 (MPKMKTDRGAAKRFKKTGSGGFKC) are disordered.

The protein belongs to the bacterial ribosomal protein bL35 family.

The chain is Large ribosomal subunit protein bL35 from Tolumonas auensis (strain DSM 9187 / NBRC 110442 / TA 4).